The chain runs to 357 residues: Uroporphyrinogen decarboxylase (357 aa).

Substrate-binding positions include 27 to 31, D77, Y154, S209, and H330; that span reads RQAGR.

The protein belongs to the uroporphyrinogen decarboxylase family. In terms of assembly, homodimer.

It is found in the cytoplasm. It catalyses the reaction uroporphyrinogen III + 4 H(+) = coproporphyrinogen III + 4 CO2. It participates in porphyrin-containing compound metabolism; protoporphyrin-IX biosynthesis; coproporphyrinogen-III from 5-aminolevulinate: step 4/4. Functionally, catalyzes the decarboxylation of four acetate groups of uroporphyrinogen-III to yield coproporphyrinogen-III. This Acinetobacter baumannii (strain ATCC 17978 / DSM 105126 / CIP 53.77 / LMG 1025 / NCDC KC755 / 5377) protein is Uroporphyrinogen decarboxylase.